Reading from the N-terminus, the 274-residue chain is ATP synthase subunit delta (274 aa).

Belongs to the ATPase delta chain family. In terms of assembly, F-type ATPases have 2 components, F(1) - the catalytic core - and F(0) - the membrane proton channel. F(1) has five subunits: alpha(3), beta(3), gamma(1), delta(1), epsilon(1). F(0) has three main subunits: a(1), b(2) and c(10-14). The alpha and beta chains form an alternating ring which encloses part of the gamma chain. F(1) is attached to F(0) by a central stalk formed by the gamma and epsilon chains, while a peripheral stalk is formed by the delta and b chains.

It localises to the cell membrane. Functionally, f(1)F(0) ATP synthase produces ATP from ADP in the presence of a proton or sodium gradient. F-type ATPases consist of two structural domains, F(1) containing the extramembraneous catalytic core and F(0) containing the membrane proton channel, linked together by a central stalk and a peripheral stalk. During catalysis, ATP synthesis in the catalytic domain of F(1) is coupled via a rotary mechanism of the central stalk subunits to proton translocation. This protein is part of the stalk that links CF(0) to CF(1). It either transmits conformational changes from CF(0) to CF(1) or is implicated in proton conduction. The protein is ATP synthase subunit delta of Salinispora tropica (strain ATCC BAA-916 / DSM 44818 / JCM 13857 / NBRC 105044 / CNB-440).